A 209-amino-acid polypeptide reads, in one-letter code: Glutathione S-transferase 1-1 (209 aa).

The GST N-terminal domain occupies Met1 to Asp81. Residues His51–Ile53 and Glu65–Arg67 contribute to the glutathione site. The GST C-terminal domain occupies Cys87–Glu209.

It belongs to the GST superfamily. Theta family. In terms of assembly, homodimer.

The enzyme catalyses RX + glutathione = an S-substituted glutathione + a halide anion + H(+). Conjugation of reduced glutathione to a wide number of exogenous and endogenous hydrophobic electrophiles. The protein is Glutathione S-transferase 1-1 (GstD1) of Drosophila yakuba (Fruit fly).